Here is a 100-residue protein sequence, read N- to C-terminus: Putative septation protein SpoVG (100 aa).

The protein belongs to the SpoVG family.

In terms of biological role, could be involved in septation. The polypeptide is Putative septation protein SpoVG (Staphylococcus aureus (strain MRSA252)).